The primary structure comprises 221 residues: Ependymin-1 (221 aa).

Positions methionine 1 to alanine 21 are cleaved as a signal peptide. 3 N-linked (GlcNAc...) asparagine glycosylation sites follow: asparagine 33, asparagine 73, and asparagine 97.

This sequence belongs to the ependymin family. Post-translationally, binds calcium through the terminal sialic acids. As to expression, EPDs are synthesized in the meninx and secreted in the cerebrospinal fluid.

It localises to the secreted. In terms of biological role, may play a role in neural plasticity. May be involved during axon regeneration. This Oncorhynchus mykiss (Rainbow trout) protein is Ependymin-1 (epd1).